A 303-amino-acid chain; its full sequence is Aquaporin NIP1-2 (303 aa).

Residues 1-39 (MAGREDGAAAGAMEEGQDSKEVKCESSEDGSSSSSSSRC) are disordered. Residues 17–26 (QDSKEVKCES) are compositionally biased toward basic and acidic residues. Transmembrane regions (helical) follow at residues 66-86 (ILAEILGTYFMIFAGCGAVVV) and 91-111 (GGAVTFPGICAVWGLVVMVLV). The short motif at 123–125 (NPA) is the NPA 1 element. Helical transmembrane passes span 145 to 165 (VVAQVLGSTMASLTLRVVFGG), 188 to 208 (AAALEFVISFFLMFVVSGVAT), and 212 to 232 (AIGELAGLAVGATVAVNVLFA). The NPA 2 motif lies at 241–243 (NPA). The helical transmembrane segment at 255–275 (YGGVWVYVAAPVSGTVCGAWA) threads the bilayer.

The protein belongs to the MIP/aquaporin (TC 1.A.8) family. NIP (TC 1.A.8.12) subfamily. As to expression, expressed in roots and leaves, and at lower levels in anthers.

Its subcellular location is the membrane. In terms of biological role, aquaporins facilitate the transport of water and small neutral solutes across cell membranes. In Oryza sativa subsp. japonica (Rice), this protein is Aquaporin NIP1-2 (NIP1-2).